An 80-amino-acid chain; its full sequence is MNKNPIYRSEEEAKDIACGNVAAELDENSQALDAINGAGWKQTIVCTIAQGTVGCLVSYGLGNGGYCCTYTVECSKTCNK.

Residues 1–38 constitute a propeptide, cleaved by FlvT; the sequence is MNKNPIYRSEEEAKDIACGNVAAELDENSQALDAINGA. Thr-43 and Thr-47 each carry 2,3-didehydrobutyrine; by FlvM1. Residues 52 to 55 constitute a cross-link (beta-methyllanthionine (Thr-Cys); by FlvM1); it reads TVGC. Residues 58–68 constitute a cross-link (lanthionine (Ser-Cys); by FlvM1); sequence SYGLGNGGYCC. Cross-links (beta-methyllanthionine (Thr-Cys); by FlvM1) lie at residues 69-74 and 71-78; these read TYTVEC and TVECSKTC.

Post-translationally, the lanthionine formed by Ser-58 and Cys-68 forms a putative lipid II binding motif. In terms of processing, maturation of FlvA1 peptides involves the enzymatic conversion of Thr, and Ser into dehydrated AA and the formation of thioether bonds with cysteines. Modifications are processed by the flavecin synthetase FlvM1. This is followed by membrane translocation and cleavage of the modified precursor. Contains DL-lanthionine and DL-beta-methyllanthionine, when coepressed in E.coli with the flavecin synthetase FlvM1.

Its subcellular location is the secreted. Functionally, lanthionine-containing peptide antibiotic (lantibiotic) only active on Gram-positive bacteria in synergy with Flvbeta peptides, which are encoded by the same operon than Flvalpha.a. Shows antibacterial activity in synergy with Flvbeta.b, Flvbeta.c, Flvbeta.e and Flvbeta.g. Does not show antibacterial activity when tested with Flvbeta.a, Flvbeta.d, Flvbeta.f and Flvbeta.h. The bactericidal activity of lantibiotics is based on depolarization of energized bacterial cytoplasmic membranes, initiated by the formation of aqueous transmembrane pores. This chain is Lantibiotic Flvalpha.a, found in Ruminococcus flavefaciens.